Reading from the N-terminus, the 962-residue chain is Leucine--tRNA ligase (962 aa).

The 'HIGH' region motif lies at 40-51 (PYPSGAGLHVGH). The disordered stretch occupies residues 548–570 (SRKLSGQHDEPNSNVTPSAVEGS). Positions 737 to 741 (KMSKS) match the 'KMSKS' region motif. Lysine 740 provides a ligand contact to ATP.

This sequence belongs to the class-I aminoacyl-tRNA synthetase family.

It localises to the cytoplasm. The catalysed reaction is tRNA(Leu) + L-leucine + ATP = L-leucyl-tRNA(Leu) + AMP + diphosphate. The polypeptide is Leucine--tRNA ligase (Christiangramia forsetii (strain DSM 17595 / CGMCC 1.15422 / KT0803) (Gramella forsetii)).